A 287-amino-acid polypeptide reads, in one-letter code: MPLLKLVFLGTGGAVPKADRMLPAIYLEDWLGHRVLLDAGEGAQYRLLQVGVSPASLTLVAVTHGHEDHVLGLPGLVITSRFLGGKVRVLAPRSMHKALERLGVEVLEGYAAERLKITCVEVCHTVDACGWLFEWDVGYKLDLQKATGLPKWALTSLIKGHPVEVEGRVIRPEDVADPAHRRFKRLLYTGDTGPCPRMWETVGEVDVLIHEATFADDVESQKAHEEGHSTFADALEAARALRAKVLILTHISARYPDKSRHRQLAAQVTPPPHVYVPDDFDTLLVQL.

Zn(2+)-binding residues include His64, His66, Asp68, His69, His124, Asp191, and His250. Catalysis depends on Asp68, which acts as the Proton acceptor.

Belongs to the RNase Z family. Homodimer. Requires Zn(2+) as cofactor.

It catalyses the reaction Endonucleolytic cleavage of RNA, removing extra 3' nucleotides from tRNA precursor, generating 3' termini of tRNAs. A 3'-hydroxy group is left at the tRNA terminus and a 5'-phosphoryl group is left at the trailer molecule.. In terms of biological role, zinc phosphodiesterase, which displays some tRNA 3'-processing endonuclease activity. Probably involved in tRNA maturation, by removing a 3'-trailer from precursor tRNA. The chain is Ribonuclease Z from Pyrobaculum calidifontis (strain DSM 21063 / JCM 11548 / VA1).